A 364-amino-acid chain; its full sequence is MEQNTDNVFNFSAGPAALPKPVMQQAQQELLNWQGLGTSVMEISHRSKEFIAVAEQSEQDLRDLLNIPDNYKVLFCQGGARAQFAAVPLNLLGDATTATYIDAGYWAESAVEEAKKYCQPDVFVAKAEKEGKQAVLPASEWQIHPDAAYVHFCPNETIDGIEINDLPVTDKPIVADMSSTILSREIDVSKYGVIYAGAQKNIGPSGIAIAIVRDDLLGLAKEVLPSILNYKVLAEQDSMFNTPPTFAWYLSGLVFKWLKAQGGVKAIEQVNREKAAILYNYIDESDFYINNVHPDNRSLMNVPFQMVKPELDAKFLKEAEALGLKSLKGHRVVGGMRASIYNAMPIEGVKALVDFMRQFEQENA.

Arg46 serves as a coordination point for L-glutamate. Pyridoxal 5'-phosphate-binding positions include 80–81, Trp106, Thr157, Asp176, and Gln199; that span reads AR. At Lys200 the chain carries N6-(pyridoxal phosphate)lysine. Pyridoxal 5'-phosphate is bound at residue 241 to 242; that stretch reads NT.

This sequence belongs to the class-V pyridoxal-phosphate-dependent aminotransferase family. SerC subfamily. Homodimer. It depends on pyridoxal 5'-phosphate as a cofactor.

It is found in the cytoplasm. It carries out the reaction O-phospho-L-serine + 2-oxoglutarate = 3-phosphooxypyruvate + L-glutamate. The enzyme catalyses 4-(phosphooxy)-L-threonine + 2-oxoglutarate = (R)-3-hydroxy-2-oxo-4-phosphooxybutanoate + L-glutamate. It participates in amino-acid biosynthesis; L-serine biosynthesis; L-serine from 3-phospho-D-glycerate: step 2/3. It functions in the pathway cofactor biosynthesis; pyridoxine 5'-phosphate biosynthesis; pyridoxine 5'-phosphate from D-erythrose 4-phosphate: step 3/5. Functionally, catalyzes the reversible conversion of 3-phosphohydroxypyruvate to phosphoserine and of 3-hydroxy-2-oxo-4-phosphonooxybutanoate to phosphohydroxythreonine. The sequence is that of Phosphoserine aminotransferase from Vibrio vulnificus (strain CMCP6).